Consider the following 302-residue polypeptide: Acetyl-coenzyme A carboxylase carboxyl transferase subunit beta (302 aa).

The region spanning 25–294 (VWTKCDSCGQ…PHFDEAAPVS (270 aa)) is the CoA carboxyltransferase N-terminal domain. Zn(2+) contacts are provided by cysteine 29, cysteine 32, cysteine 48, and cysteine 51. The C4-type zinc-finger motif lies at 29 to 51 (CDSCGQVLYRAELERNLEVCPKC). Positions 281–302 (NQPQPHFDEAAPVSEQENQADA) are disordered.

Belongs to the AccD/PCCB family. As to quaternary structure, acetyl-CoA carboxylase is a heterohexamer composed of biotin carboxyl carrier protein (AccB), biotin carboxylase (AccC) and two subunits each of ACCase subunit alpha (AccA) and ACCase subunit beta (AccD). Zn(2+) serves as cofactor.

It localises to the cytoplasm. The catalysed reaction is N(6)-carboxybiotinyl-L-lysyl-[protein] + acetyl-CoA = N(6)-biotinyl-L-lysyl-[protein] + malonyl-CoA. It participates in lipid metabolism; malonyl-CoA biosynthesis; malonyl-CoA from acetyl-CoA: step 1/1. Its function is as follows. Component of the acetyl coenzyme A carboxylase (ACC) complex. Biotin carboxylase (BC) catalyzes the carboxylation of biotin on its carrier protein (BCCP) and then the CO(2) group is transferred by the transcarboxylase to acetyl-CoA to form malonyl-CoA. In Serratia proteamaculans (strain 568), this protein is Acetyl-coenzyme A carboxylase carboxyl transferase subunit beta.